A 290-amino-acid chain; its full sequence is 33 kDa chaperonin (290 aa).

2 disulfide bridges follow: cysteine 235/cysteine 237 and cysteine 268/cysteine 271.

This sequence belongs to the HSP33 family. In terms of processing, under oxidizing conditions two disulfide bonds are formed involving the reactive cysteines. Under reducing conditions zinc is bound to the reactive cysteines and the protein is inactive.

Its subcellular location is the cytoplasm. In terms of biological role, redox regulated molecular chaperone. Protects both thermally unfolding and oxidatively damaged proteins from irreversible aggregation. Plays an important role in the bacterial defense system toward oxidative stress. The protein is 33 kDa chaperonin of Streptococcus pyogenes serotype M49 (strain NZ131).